Here is an 88-residue protein sequence, read N- to C-terminus: Large ribosomal subunit protein bL27 (88 aa).

Positions 1–21 (MAHKKGASSSRNGRDSNAKRL) are disordered.

Belongs to the bacterial ribosomal protein bL27 family.

The protein is Large ribosomal subunit protein bL27 of Thermobifida fusca (strain YX).